Consider the following 481-residue polypeptide: Adenosylhomocysteinase (481 aa).

Substrate contacts are provided by Thr-65, Asp-140, and Glu-200. 201–203 is an NAD(+) binding site; that stretch reads TTT. Lys-230 and Asp-234 together coordinate substrate. NAD(+)-binding positions include Asn-235, 264–269, Glu-287, Asn-322, 343–345, and Asn-393; these read GYGDVG and IGH.

It belongs to the adenosylhomocysteinase family. NAD(+) is required as a cofactor.

It localises to the cytoplasm. The enzyme catalyses S-adenosyl-L-homocysteine + H2O = L-homocysteine + adenosine. It participates in amino-acid biosynthesis; L-homocysteine biosynthesis; L-homocysteine from S-adenosyl-L-homocysteine: step 1/1. Its function is as follows. May play a key role in the regulation of the intracellular concentration of adenosylhomocysteine. The sequence is that of Adenosylhomocysteinase from Polynucleobacter asymbioticus (strain DSM 18221 / CIP 109841 / QLW-P1DMWA-1) (Polynucleobacter necessarius subsp. asymbioticus).